Reading from the N-terminus, the 331-residue chain is Geranylgeranyl transferase type-2 subunit beta (331 aa).

Residue Gly2 is modified to N-acetylglycine. Thr3 is subject to Phosphothreonine. PFTB repeat units lie at residues 20 to 61 (LEKH…DLMG), 68 to 109 (REEI…TLYD), 116 to 157 (INKV…ALLG), 164 to 205 (VEKA…AITS), 212 to 253 (SDLL…KIIG), and 260 to 302 (REKL…SLLG). Residue 190 to 192 (HAG) participates in geranylgeranyl diphosphate binding. Residues Asp238 and Cys240 each contribute to the Zn(2+) site. Residue 241–244 (YSWW) coordinates geranylgeranyl diphosphate. His290 contributes to the Zn(2+) binding site.

It belongs to the protein prenyltransferase subunit beta family. Heterotrimer composed of RABGGTA, RABGGTB and CHM; within this trimer, RABGGTA and RABGGTB form the catalytic component B, while CHM (component A) mediates peptide substrate binding. The Rab GGTase dimer (RGGT) interacts with CHM (component A) prior to Rab protein binding; the association is stabilized by geranylgeranyl pyrophosphate (GGpp). The CHM:RGGT:Rab complex is destabilized by GGpp. Interaction of RABGGTB with prenylated PTP4A2 precludes its association with RABGGTA and inhibits enzyme activity. Interacts with CHODL. Interacts with non-phosphorylated form of RAB8A; phosphorylation of RAB8A at 'Thr-72' disrupts this interaction. It depends on Zn(2+) as a cofactor.

The enzyme catalyses geranylgeranyl diphosphate + L-cysteinyl-[protein] = S-geranylgeranyl-L-cysteinyl-[protein] + diphosphate. Its activity is regulated as follows. The enzymatic reaction requires the aid of a Rab escort protein (also called component A). Its function is as follows. Catalyzes the transfer of a geranylgeranyl moiety from geranylgeranyl diphosphate to both cysteines of Rab proteins with the C-terminal sequence -XXCC, -XCXC and -CCXX, such as RAB1A, RAB3A, RAB5A and RAB7A. The polypeptide is Geranylgeranyl transferase type-2 subunit beta (RABGGTB) (Bos taurus (Bovine)).